We begin with the raw amino-acid sequence, 750 residues long: Photosystem I P700 chlorophyll a apoprotein A1 (750 aa).

8 consecutive transmembrane segments (helical) span residues 70-93, 156-179, 195-219, 291-309, 346-369, 385-411, 433-455, and 531-549; these read VFSA…FHGA, LYCT…FHYH, LNHH…HVSL, IAHH…GHMY, WHAQ…HHMY, LSLF…IFMV, AIIS…LYIH, and FLVH…LILL. Positions 573 and 582 each coordinate [4Fe-4S] cluster. The next 2 membrane-spanning stretches (helical) occupy residues 589-610 and 664-686; these read HVFL…HFSW and LSAY…MFLF. His-675 provides a ligand contact to chlorophyll a'. Positions 683 and 691 each coordinate chlorophyll a. Phylloquinone is bound at residue Trp-692. A helical transmembrane segment spans residues 724 to 744; sequence AVGVTHYLLGGIATTWAFFLA.

This sequence belongs to the PsaA/PsaB family. The PsaA/B heterodimer binds the P700 chlorophyll special pair and subsequent electron acceptors. PSI consists of a core antenna complex that captures photons, and an electron transfer chain that converts photonic excitation into a charge separation. The eukaryotic PSI reaction center is composed of at least 11 subunits. The cofactor is P700 is a chlorophyll a/chlorophyll a' dimer, A0 is one or more chlorophyll a, A1 is one or both phylloquinones and FX is a shared 4Fe-4S iron-sulfur center..

It localises to the plastid. The protein resides in the chloroplast thylakoid membrane. It carries out the reaction reduced [plastocyanin] + hnu + oxidized [2Fe-2S]-[ferredoxin] = oxidized [plastocyanin] + reduced [2Fe-2S]-[ferredoxin]. In terms of biological role, psaA and PsaB bind P700, the primary electron donor of photosystem I (PSI), as well as the electron acceptors A0, A1 and FX. PSI is a plastocyanin-ferredoxin oxidoreductase, converting photonic excitation into a charge separation, which transfers an electron from the donor P700 chlorophyll pair to the spectroscopically characterized acceptors A0, A1, FX, FA and FB in turn. Oxidized P700 is reduced on the lumenal side of the thylakoid membrane by plastocyanin. This Coffea arabica (Arabian coffee) protein is Photosystem I P700 chlorophyll a apoprotein A1.